A 159-amino-acid polypeptide reads, in one-letter code: Phosphopantetheine adenylyltransferase (159 aa).

S8 contacts substrate. Residues 8–9 (SF) and H16 each bind ATP. Substrate-binding residues include K40, T72, and R86. ATP is bound by residues 87–89 (GLR), E97, and 122–128 (HSFVSSS).

Belongs to the bacterial CoaD family. Homohexamer. The cofactor is Mg(2+).

It localises to the cytoplasm. It catalyses the reaction (R)-4'-phosphopantetheine + ATP + H(+) = 3'-dephospho-CoA + diphosphate. It participates in cofactor biosynthesis; coenzyme A biosynthesis; CoA from (R)-pantothenate: step 4/5. Functionally, reversibly transfers an adenylyl group from ATP to 4'-phosphopantetheine, yielding dephospho-CoA (dPCoA) and pyrophosphate. The protein is Phosphopantetheine adenylyltransferase of Synechococcus sp. (strain JA-2-3B'a(2-13)) (Cyanobacteria bacterium Yellowstone B-Prime).